The following is a 637-amino-acid chain: tRNA 5-methylaminomethyl-2-thiouridine biosynthesis bifunctional protein MnmC (637 aa).

Residues 1 to 232 (MPERIEWLED…KRDNLQGEFN (232 aa)) form a tRNA (mnm(5)s(2)U34)-methyltransferase region. An FAD-dependent cmnm(5)s(2)U34 oxidoreductase region spans residues 255-637 (IGAGLAGAAV…YGEAKLVSED (383 aa)).

This sequence in the N-terminal section; belongs to the methyltransferase superfamily. tRNA (mnm(5)s(2)U34)-methyltransferase family. The protein in the C-terminal section; belongs to the DAO family. It depends on FAD as a cofactor.

The protein localises to the cytoplasm. It carries out the reaction 5-aminomethyl-2-thiouridine(34) in tRNA + S-adenosyl-L-methionine = 5-methylaminomethyl-2-thiouridine(34) in tRNA + S-adenosyl-L-homocysteine + H(+). Catalyzes the last two steps in the biosynthesis of 5-methylaminomethyl-2-thiouridine (mnm(5)s(2)U) at the wobble position (U34) in tRNA. Catalyzes the FAD-dependent demodification of cmnm(5)s(2)U34 to nm(5)s(2)U34, followed by the transfer of a methyl group from S-adenosyl-L-methionine to nm(5)s(2)U34, to form mnm(5)s(2)U34. The sequence is that of tRNA 5-methylaminomethyl-2-thiouridine biosynthesis bifunctional protein MnmC from Polaromonas sp. (strain JS666 / ATCC BAA-500).